The primary structure comprises 1070 residues: Duffy receptor (1070 aa).

The first 20 residues, 1–20 (MKGKNRSLFVLLVLLLLHKV), serve as a signal peptide directing secretion. At 21–1007 (NNVLLERTIE…CFTKGGFKDK (987 aa)) the chain is on the extracellular side. The segment at 116–146 (YMEGKDGGDKTGEEKDGEHKTDSKTDNGKGA) is disordered. Positions 118–142 (EGKDGGDKTGEEKDGEHKTDSKTDN) are enriched in basic and acidic residues. Residue N183 is glycosylated (N-linked (GlcNAc...) asparagine). A pvRII region; mediates ACKR1 binding region spans residues 211-521 (NTVMKNCNYK…AKKNTQEVVT (311 aa)). 2 disulfides stabilise this stretch: C217–C246 and C230–C237. Residues N255, N351, and N420 are each glycosylated (N-linked (GlcNAc...) asparagine). Disulfide bonds link C300–C377, C415–C432, C427–C507, and C436–C505. Composition is skewed to polar residues over residues 525–542 (NAAKSQATNSNPISQPVD), 554–569 (THGNVNSGQDSSTTGK), and 629–642 (GASNSRPSESTVEA). Positions 525-906 (NAAKSQATNS…HLNSNNNLSN (382 aa)) are disordered. The span at 697-711 (ETGKGQDNDMAKATK) shows a compositional bias: basic and acidic residues. Residues 712–728 (DSSNSSDGTSSATGDTT) are compositionally biased toward low complexity. N715 carries an N-linked (GlcNAc...) asparagine glycan. Residues 730 to 748 (AVDREINKGVPEDRDKTVG) show a composition bias toward basic and acidic residues. N-linked (GlcNAc...) asparagine glycosylation is present at N787. The segment covering 808–817 (LSKTESLEST) has biased composition (low complexity). Residue N825 is glycosylated (N-linked (GlcNAc...) asparagine). 2 stretches are compositionally biased toward basic and acidic residues: residues 835–849 (NGGKEKDLQKHDFKS) and 865–889 (AEGHDRDSIKNDKAERRKHMNKDTF). Over residues 895–906 (SHHLNSNNNLSN) the composition is skewed to low complexity. 2 N-linked (GlcNAc...) asparagine glycosylation sites follow: N903 and N938. Residues 1008–1025 (TYFAAAGALLILLLLIAS) form a helical membrane-spanning segment. Residues 1026–1070 (RKMIKNDSEEATFNEFEEYCDNIHRIPLMPNNIEHMQPSTPLDYS) are Cytoplasmic-facing.

As to quaternary structure, homodimer; dimerization (via PvRII region) is promoted by the interaction with human ACKR1. Interacts (via PvRII region) with human ACKR1 (via N-terminal extracellular domain).

It is found in the membrane. Its function is as follows. Binds to the human erythrocyte Duffy blood group determinant (ACKR1). The sequence is that of Duffy receptor (PVDR) from Plasmodium vivax (strain Salvador I).